Reading from the N-terminus, the 599-residue chain is MAKEIILGIDLGTTNSVVSIIENKKPVVLENFNGKRTTPSVVAFKNGEIQVGEIAKRQLETNPDTIASIKRLMGTTKTVKANGKTYKPEEISAMILSHLKEYAEKKVGKKLTKAVITVPAYFDNSQREATKIAGKIAGLDVLRIINEPTAAALSFGLDKKEKEMKVLVYDLGGGTFDVSVLELENGTFEVLSTSGDNHLGGDDWDHVIVEWLTKEIKNRYDFDPSKDKMVMTRLKEAAEKAKIDLSAQMVAQITLPFLSVTSKGPINVDLELKRSEFEKMTTHLVDRTRKPIEDALREAKIKASDLSEVLLVGGSTRIPAVQSMVEHVLGKKPNRSINPDEVVAIGAAIQGGVLAGDINDVLLLDVTPLTLGIETLGGVATPLIPRNTTIPVTKSQVFSTAADNQSEVTISVVQGERPMASDNKQLGQFNLSGIEPAPRGVPQIEVSFSIDVNGITTVKAKDLKTNKEQEITIKNSSKLSDEEVEKMVKEAEENREADKAKKEKVEVIVRAESLISQLEKSLVDQGDKVDAKAKEETQKQIQELKDLIKDDKIEELKVKLEQIEQAAQAFAQYSAQQAATENSKDSDTVEAEIVDDKAN.

At T187 the chain carries Phosphothreonine; by autocatalysis. Positions 575–599 (AQQAATENSKDSDTVEAEIVDDKAN) are disordered.

The protein belongs to the heat shock protein 70 family.

Its function is as follows. Acts as a chaperone. This Mycoplasmopsis pulmonis (strain UAB CTIP) (Mycoplasma pulmonis) protein is Chaperone protein DnaK.